The chain runs to 460 residues: Phosphoglucomutase (460 aa).

Serine 103 (phosphoserine intermediate) is an active-site residue. Serine 103 serves as a coordination point for Mg(2+). Substrate is bound by residues 103-104 (SH) and lysine 113. Aspartate 239, aspartate 241, and aspartate 243 together coordinate Mg(2+). Substrate contacts are provided by residues 243–244 (DR), threonine 303, and 322–324 (EMS).

Belongs to the phosphohexose mutase family. Mg(2+) serves as cofactor.

It localises to the cytoplasm. It carries out the reaction alpha-D-glucose 1-phosphate = alpha-D-glucose 6-phosphate. In terms of biological role, this enzyme participates in both the breakdown and synthesis of glucose. In Neisseria meningitidis serogroup A / serotype 4A (strain DSM 15465 / Z2491), this protein is Phosphoglucomutase (pgm).